We begin with the raw amino-acid sequence, 561 residues long: Putative transport protein YbjL (561 aa).

Transmembrane regions (helical) follow at residues 8–28, 32–52, 66–86, 94–114, and 158–178; these read LLNGNYILLLFVVLALGLCLG, LGSVQLGNSIGVLVVSLLLGQ, FMLFIFCVGVEAGPNFFSIFF, MLALVMVGSALLIALGLGKLF, and NLSLGYALTYLIGLVSLIVGA. RCK C-terminal domains are found at residues 200–288 and 292–373; these read RGLD…SFRN and VFDR…RIGF. A run of 5 helical transmembrane segments spans residues 383–403, 406–426, 447–467, 475–495, and 540–560; these read LLAFCAFFIIGLMIGMITFQF, FSFGIGNAAGLLFAGIMLGFL, FGLMVFMAGVGLSAGSGINNG, MLIAGLVVSLVPVVICFLFGA, and AIANVLLTLAGTLIVIIWPGL.

This sequence belongs to the AAE transporter (TC 2.A.81) family. YbjL subfamily.

It localises to the cell membrane. In Salmonella paratyphi C (strain RKS4594), this protein is Putative transport protein YbjL.